A 1025-amino-acid polypeptide reads, in one-letter code: Multidrug resistance protein MdtC (1025 aa).

Transmembrane regions (helical) follow at residues 15 to 35, 333 to 353, 360 to 380, 387 to 407, 431 to 451, 469 to 489, 528 to 548, 851 to 871, 875 to 895, 897 to 917, 953 to 973, and 984 to 1004; these read ILIS…LPVA, EVEQ…FLFL, LIPA…MYLC, LSLM…IVVL, VGFT…PLLL, VAIG…CGWL, LTGL…ISIP, AQVI…GVLY, VHPL…LLAL, IFDA…IGIV, PIMM…LSGG, and ITIV…TPVV.

Belongs to the resistance-nodulation-cell division (RND) (TC 2.A.6) family. MdtC subfamily. In terms of assembly, part of a tripartite efflux system composed of MdtA, MdtB and MdtC. MdtC forms a heteromultimer with MdtB.

The protein resides in the cell inner membrane. The chain is Multidrug resistance protein MdtC from Klebsiella pneumoniae subsp. pneumoniae (strain ATCC 700721 / MGH 78578).